The primary structure comprises 3078 residues: Probable polyketide synthase 34 (3078 aa).

A Ketosynthase family 3 (KS3) domain is found at 28–462; the sequence is SGDVAVIGIG…GSNVCLILSE (435 aa). Residues cysteine 200, histidine 339, and histidine 385 each act as for beta-ketoacyl synthase activity in the active site. The segment at 665 to 698 is acyl/malonyl transferase; that stretch reads GVSADIIIGHSLGEISSSYCSGIIDFQTLCYLTY. Serine 675 functions as the For acyl/malonyl transferase activity in the catalytic mechanism. An N-terminal hotdog fold region spans residues 954 to 1083; sequence HEKIKNEGPS…GNFSLTKHNI (130 aa). The region spanning 954–1264 is the PKS/mFAS DH domain; that stretch reads HEKIKNEGPS…CTIVGSNPDS (311 aa). The active-site Proton acceptor; for dehydratase activity is the histidine 995. Positions 1099 to 1264 are C-terminal hotdog fold; sequence NFTSISKQDL…CTIVGSNPDS (166 aa). The active-site Proton donor; for dehydratase activity is the aspartate 1171. Positions 1375–1396 are disordered; the sequence is NINNNNNNNNNNNNNNNNNSNG. Residues 2541–2618 enclose the Carrier domain; it reads DNNEIIRSTI…QSIEIIKSAH (78 aa). Residue serine 2578 is modified to O-(pantetheine 4'-phosphoryl)serine. Disordered stretches follow at residues 2617-2640 and 2739-2761; these read AHNN…NNNN and NKGS…DNNS. A compositionally biased stretch (low complexity) spans 2619–2640; the sequence is NNNNNNNNNNNNNNNNNNNNNN. Positions 2621-2652 form a coiled coil; it reads NNNNNNNNNNNNNNNNNNNNLVKKEQQSLDEF.

Requires pantetheine 4'-phosphate as cofactor.

Functionally, probable polyketide synthase. The chain is Probable polyketide synthase 34 (pks34) from Dictyostelium discoideum (Social amoeba).